The primary structure comprises 102 residues: Protein CASC2, isoform 3 (102 aa).

In terms of tissue distribution, expressed in normal and neoplastic endometrial tissues.

May act as a potential tumor suppressor. In Homo sapiens (Human), this protein is Protein CASC2, isoform 3 (CASC2).